Here is a 437-residue protein sequence, read N- to C-terminus: MDRISNLPDGVIYRVISLLSTKEATCLKYTSKNWLNLVTIIPIAVFVDSSASAISASFKDFADRIMLARLASHRIRRFSLKLQSLNFAQYKTVNDCLRNVLECGVLDLELDINVRGDYSLPSEIFTCKSVVKMKLGSGFVIDILPKNAWLPALKTLLLDTVRFEFDNTAGCSFTKLISACPVLEELVIDGHNCEDWKWSRRVSSQILKRLTIRRKEWVHDGSSFEPISLDIPSLEYFKYFDTLRDSYPVVKLNSLVEAKLELPSLYIGDTYNVRNLIKGLKNVQILRLGAVDTMHLFWVFREAVPVFENLFHLSVSTHDAICWDDLRILLEKSPNLKTLTIEALHYHGYGDENSVCECLDGYSFLLSCPIEILKITEFGGEIEEMEQVEYVLENLLCLVLLEIHVKTKKIDRKLQILADLLMLPRASSKCKVQVKFV.

The region spanning 1–49 (MDRISNLPDGVIYRVISLLSTKEATCLKYTSKNWLNLVTIIPIAVFVDS) is the F-box domain.

The polypeptide is F-box protein At3g62430 (Arabidopsis thaliana (Mouse-ear cress)).